The chain runs to 180 residues: Large ribosomal subunit protein uL5 (180 aa).

Belongs to the universal ribosomal protein uL5 family. In terms of assembly, part of the 50S ribosomal subunit; part of the 5S rRNA/L5/L18/L25 subcomplex. Contacts the 5S rRNA and the P site tRNA. Forms a bridge to the 30S subunit in the 70S ribosome.

Its function is as follows. This is one of the proteins that bind and probably mediate the attachment of the 5S RNA into the large ribosomal subunit, where it forms part of the central protuberance. In the 70S ribosome it contacts protein S13 of the 30S subunit (bridge B1b), connecting the 2 subunits; this bridge is implicated in subunit movement. Contacts the P site tRNA; the 5S rRNA and some of its associated proteins might help stabilize positioning of ribosome-bound tRNAs. This is Large ribosomal subunit protein uL5 from Xanthomonas campestris pv. campestris (strain 8004).